The following is a 363-amino-acid chain: Probable endopolygalacturonase B (363 aa).

The signal sequence occupies residues 1 to 20 (MQLLQSSVIAATVGAALVAA). A propeptide spanning residues 21 to 28 (VPVELEAR) is cleaved from the precursor. The cysteines at positions 31 and 46 are disulfide-linked. PbH1 repeat units lie at residues 158–187 (SDNLNITDVTIDNSAGTAEGHNTDAFDVGS), 188–209 (STYINIDGATVYNQDDCLAINS), 210–230 (GSHITFTNGYCDGGHGLSIGS), 239–260 (VEDVTISNSKVVNSQNGVRIKT), 268–290 (VSNVKFEDITLSGITKYGLIVEQ), and 302–347 (TNGI…SITG). A glycan (N-linked (GlcNAc...) asparagine) is linked at Asn-162. Asp-202 (proton donor) is an active-site residue. A disulfide bridge links Cys-204 with Cys-220. His-224 is a catalytic residue. 2 disulfides stabilise this stretch: Cys-330/Cys-335 and Cys-354/Cys-363.

Belongs to the glycosyl hydrolase 28 family.

It is found in the secreted. It catalyses the reaction (1,4-alpha-D-galacturonosyl)n+m + H2O = (1,4-alpha-D-galacturonosyl)n + (1,4-alpha-D-galacturonosyl)m.. Involved in maceration and soft-rotting of plant tissue. Hydrolyzes the 1,4-alpha glycosidic bonds of de-esterified pectate in the smooth region of the plant cell wall. The chain is Probable endopolygalacturonase B (pgaB) from Aspergillus flavus (strain ATCC 200026 / FGSC A1120 / IAM 13836 / NRRL 3357 / JCM 12722 / SRRC 167).